A 240-amino-acid polypeptide reads, in one-letter code: tRNA (guanine-N(1)-)-methyltransferase (240 aa).

S-adenosyl-L-methionine-binding positions include Gly-108 and 127–132 (LGDYIL).

Belongs to the RNA methyltransferase TrmD family. In terms of assembly, homodimer.

Its subcellular location is the cytoplasm. The catalysed reaction is guanosine(37) in tRNA + S-adenosyl-L-methionine = N(1)-methylguanosine(37) in tRNA + S-adenosyl-L-homocysteine + H(+). Functionally, specifically methylates guanosine-37 in various tRNAs. The polypeptide is tRNA (guanine-N(1)-)-methyltransferase (Streptococcus sanguinis (strain SK36)).